Reading from the N-terminus, the 412-residue chain is DNA polymerase IV (412 aa).

One can recognise a UmuC domain in the interval 12 to 193 (ILHVDMNCFF…LPVGAMHGIG (182 aa)). Mg(2+) contacts are provided by aspartate 16 and aspartate 112. Glutamate 113 is a catalytic residue. The tract at residues 235–257 (KGMDDREVDPSQMGQHKSVGNSM) is disordered. Over residues 246–257 (QMGQHKSVGNSM) the composition is skewed to polar residues.

The protein belongs to the DNA polymerase type-Y family. In terms of assembly, monomer. The cofactor is Mg(2+).

Its subcellular location is the cytoplasm. The catalysed reaction is DNA(n) + a 2'-deoxyribonucleoside 5'-triphosphate = DNA(n+1) + diphosphate. Its function is as follows. Poorly processive, error-prone DNA polymerase involved in untargeted mutagenesis. Copies undamaged DNA at stalled replication forks, which arise in vivo from mismatched or misaligned primer ends. These misaligned primers can be extended by PolIV. Exhibits no 3'-5' exonuclease (proofreading) activity. May be involved in translesional synthesis, in conjunction with the beta clamp from PolIII. The chain is DNA polymerase IV from Bacillus anthracis.